The chain runs to 479 residues: Sulfate adenylyltransferase subunit 1 (479 aa).

The 215-residue stretch at 25 to 239 (KSLLRFLTCG…EVLETVDIQR (215 aa)) folds into the tr-type G domain. The tract at residues 34–41 (GSVDDGKS) is G1. 34–41 (GSVDDGKS) contributes to the GTP binding site. The G2 stretch occupies residues 92 to 96 (GITID). The G3 stretch occupies residues 113–116 (DTPG). GTP is bound by residues 113–117 (DTPGH) and 168–171 (NKMD). The segment at 168–171 (NKMD) is G4. Residues 206-208 (SAL) form a G5 region.

It belongs to the TRAFAC class translation factor GTPase superfamily. Classic translation factor GTPase family. CysN/NodQ subfamily. Heterodimer composed of CysD, the smaller subunit, and CysN.

The enzyme catalyses sulfate + ATP + H(+) = adenosine 5'-phosphosulfate + diphosphate. The protein operates within sulfur metabolism; hydrogen sulfide biosynthesis; sulfite from sulfate: step 1/3. Functionally, with CysD forms the ATP sulfurylase (ATPS) that catalyzes the adenylation of sulfate producing adenosine 5'-phosphosulfate (APS) and diphosphate, the first enzymatic step in sulfur assimilation pathway. APS synthesis involves the formation of a high-energy phosphoric-sulfuric acid anhydride bond driven by GTP hydrolysis by CysN coupled to ATP hydrolysis by CysD. In Salmonella gallinarum (strain 287/91 / NCTC 13346), this protein is Sulfate adenylyltransferase subunit 1.